The chain runs to 376 residues: Lipoyl synthase, mitochondrial (376 aa).

The [4Fe-4S] cluster site is built by cysteine 102, cysteine 107, cysteine 113, cysteine 133, cysteine 137, cysteine 140, and serine 348. A Radical SAM core domain is found at 116 to 337 (GGEDKTATAT…EEVGGEMGFA (222 aa)).

This sequence belongs to the radical SAM superfamily. Lipoyl synthase family. It depends on [4Fe-4S] cluster as a cofactor.

Its subcellular location is the mitochondrion. It catalyses the reaction [[Fe-S] cluster scaffold protein carrying a second [4Fe-4S](2+) cluster] + N(6)-octanoyl-L-lysyl-[protein] + 2 oxidized [2Fe-2S]-[ferredoxin] + 2 S-adenosyl-L-methionine + 4 H(+) = [[Fe-S] cluster scaffold protein] + N(6)-[(R)-dihydrolipoyl]-L-lysyl-[protein] + 4 Fe(3+) + 2 hydrogen sulfide + 2 5'-deoxyadenosine + 2 L-methionine + 2 reduced [2Fe-2S]-[ferredoxin]. Its pathway is protein modification; protein lipoylation via endogenous pathway; protein N(6)-(lipoyl)lysine from octanoyl-[acyl-carrier-protein]: step 2/2. Catalyzes the radical-mediated insertion of two sulfur atoms into the C-6 and C-8 positions of the octanoyl moiety bound to the lipoyl domains of lipoate-dependent enzymes, thereby converting the octanoylated domains into lipoylated derivatives. This is Lipoyl synthase, mitochondrial from Branchiostoma floridae (Florida lancelet).